The chain runs to 361 residues: Alanine racemase 2 (361 aa).

Residue Lys-30 is the Proton acceptor; specific for D-alanine of the active site. N6-(pyridoxal phosphate)lysine is present on Lys-30. Arg-122 is a binding site for substrate. Residue Tyr-256 is the Proton acceptor; specific for L-alanine of the active site. Met-303 serves as a coordination point for substrate.

This sequence belongs to the alanine racemase family. The cofactor is pyridoxal 5'-phosphate.

It catalyses the reaction L-alanine = D-alanine. The protein operates within amino-acid biosynthesis; D-alanine biosynthesis; D-alanine from L-alanine: step 1/1. In terms of biological role, catalyzes the interconversion of L-alanine and D-alanine. May also act on other amino acids. This Staphylococcus aureus (strain Mu50 / ATCC 700699) protein is Alanine racemase 2 (alr2).